Here is a 269-residue protein sequence, read N- to C-terminus: Mitochondrial scaffolding protein 1 (269 aa).

The PDZ domain maps to 49-121 (VVEIEKTSKG…HDEAVEVFRS (73 aa)). Residues 143-185 (RTQTPTASVSITPQVTPQTRSTQNNTDTPKSMSHSESKSRLTS) are disordered. Residues 145-174 (QTPTASVSITPQVTPQTRSTQNNTDTPKSM) are compositionally biased toward polar residues. The helical transmembrane segment at 240–262 (WLTEALYVSIGLGALTISGYLAY) threads the bilayer.

It is found in the membrane. Plays a role in the regulation of lifespan in a partially daf-16-mediated manner, and may be involved in regulating the levels of reactive oxygen species production in response to heat stress. In Caenorhabditis elegans, this protein is Mitochondrial scaffolding protein 1.